The sequence spans 494 residues: Alanine--glyoxylate aminotransferase 2-like (494 aa).

Position 291 is an N6-(pyridoxal phosphate)lysine (lysine 291).

Belongs to the class-III pyridoxal-phosphate-dependent aminotransferase family. It depends on pyridoxal 5'-phosphate as a cofactor.

The protein is Alanine--glyoxylate aminotransferase 2-like of Drosophila melanogaster (Fruit fly).